The sequence spans 226 residues: Deoxyribose-phosphate aldolase (226 aa).

The active-site Proton donor/acceptor is aspartate 93. Catalysis depends on lysine 159, which acts as the Schiff-base intermediate with acetaldehyde. Catalysis depends on lysine 189, which acts as the Proton donor/acceptor.

Belongs to the DeoC/FbaB aldolase family. DeoC type 1 subfamily.

Its subcellular location is the cytoplasm. It catalyses the reaction 2-deoxy-D-ribose 5-phosphate = D-glyceraldehyde 3-phosphate + acetaldehyde. It participates in carbohydrate degradation; 2-deoxy-D-ribose 1-phosphate degradation; D-glyceraldehyde 3-phosphate and acetaldehyde from 2-deoxy-alpha-D-ribose 1-phosphate: step 2/2. Functionally, catalyzes a reversible aldol reaction between acetaldehyde and D-glyceraldehyde 3-phosphate to generate 2-deoxy-D-ribose 5-phosphate. This Mycobacterium marinum (strain ATCC BAA-535 / M) protein is Deoxyribose-phosphate aldolase.